The chain runs to 461 residues: SWM histone demethylase complex subunit phf1 (461 aa).

The tract at residues 79–130 (PYGGMTMPASSSSGATSVPPEQDPSLSVSFNRLPKSASTKTKNGRIRSSRRE) is disordered. Polar residues predominate over residues 102–119 (PSLSVSFNRLPKSASTKT). The PHD-type zinc finger occupies 190 to 246 (VTLCSVCQRGHSPLSNRIVFCDGCNSPYHQLCHHPPIDDATVQDVDAEWFCMKCQYR).

Component of the SWM histone demethylase complex composed of at least lsd1, lsd2, phf1 and phf2.

It is found in the nucleus. Component of the SWM histone demethylase complex that specifically demethylates H3K9me2, a specific tag for epigenetic transcriptional activation, thereby acting as a corepressor. Has a role in regulating heterochromatin propagation and euchromatic transcription. The chain is SWM histone demethylase complex subunit phf1 (phf1) from Schizosaccharomyces pombe (strain 972 / ATCC 24843) (Fission yeast).